Consider the following 248-residue polypeptide: 14-3-3-like protein G-BOX factor 14 kappa (248 aa).

Serine 70, serine 112, and serine 193 each carry phosphoserine. Threonine 214 bears the Phosphothreonine mark.

The protein belongs to the 14-3-3 family. In terms of assembly, interacts with the isocitrate dehydrogenase IDH3, and malate dehydrogenases MDH1 and MDH2. Interacts with CINV1.

Its subcellular location is the nucleus. It is found in the cytoplasm. In terms of biological role, is associated with a DNA binding complex that binds to the G box, a well-characterized cis-acting DNA regulatory element found in plant genes. Involved in the regulation of nutrient metabolism. Negative regulator of freezing tolerance that modulates cold-responsive C-repeat-binding factors (CBF) DREB1A AND DREB1B proteins stability by facilitating their ubiquitin-mediated degradation; this processus is counteracted by B1L. This is 14-3-3-like protein G-BOX factor 14 kappa from Arabidopsis thaliana (Mouse-ear cress).